The chain runs to 147 residues: Microsomal glutathione S-transferase 2 (147 aa).

3 consecutive transmembrane segments (helical) span residues 6-26, 62-82, and 107-127; these read SLLA…AWRV, VFIV…AACL, and GFRL…LGVA.

In terms of assembly, homotrimer.

It localises to the endoplasmic reticulum membrane. It is found in the microsome membrane. It catalyses the reaction RX + glutathione = an S-substituted glutathione + a halide anion + H(+). The enzyme catalyses 1-chloro-2,4-dinitrobenzene + glutathione = 2,4-dinitrophenyl-S-glutathione + chloride + H(+). The catalysed reaction is leukotriene C4 = leukotriene A4 + glutathione. It carries out the reaction (5S)-hydroperoxy-(6E,8Z,11Z,14Z)-eicosatetraenoate + 2 glutathione = (5S)-hydroxy-(6E,8Z,11Z,14Z)-eicosatetraenoate + glutathione disulfide + H2O. Its activity is regulated as follows. Each monomer binds on GSH molecule but only one subunit is catalytically active. Catalyzes several different glutathione-dependent reactions. Catalyzes the glutathione-dependent reduction of lipid hydroperoxides, such as 5-HPETE. Has glutathione transferase activity, toward xenobiotic electrophiles, such as 1-chloro-2, 4-dinitrobenzene (CDNB). Also catalyzes the conjugation of leukotriene A4 with reduced glutathione to form leukotriene C4 (LTC4). Involved in oxidative DNA damage induced by ER stress and anticancer agents by activating LTC4 biosynthetic machinery in nonimmune cells. The polypeptide is Microsomal glutathione S-transferase 2 (Mus musculus (Mouse)).